The primary structure comprises 349 residues: Anthranilate phosphoribosyltransferase (349 aa).

5-phospho-alpha-D-ribose 1-diphosphate contacts are provided by residues G87, 90–91 (GD), T95, 97–100 (NIST), 115–123 (KHGNRSVSS), and S127. Residue G87 coordinates anthranilate. Residue S99 coordinates Mg(2+). N118 is an anthranilate binding site. R173 is a binding site for anthranilate. Positions 231 and 232 each coordinate Mg(2+).

The protein belongs to the anthranilate phosphoribosyltransferase family. As to quaternary structure, homodimer. Mg(2+) is required as a cofactor.

It carries out the reaction N-(5-phospho-beta-D-ribosyl)anthranilate + diphosphate = 5-phospho-alpha-D-ribose 1-diphosphate + anthranilate. It participates in amino-acid biosynthesis; L-tryptophan biosynthesis; L-tryptophan from chorismate: step 2/5. Functionally, catalyzes the transfer of the phosphoribosyl group of 5-phosphorylribose-1-pyrophosphate (PRPP) to anthranilate to yield N-(5'-phosphoribosyl)-anthranilate (PRA). In Shewanella loihica (strain ATCC BAA-1088 / PV-4), this protein is Anthranilate phosphoribosyltransferase.